The primary structure comprises 207 residues: uncharacterized protein (207 aa).

Belongs to the methyltransferase superfamily.

This is an uncharacterized protein from Escherichia coli (strain K12).